A 185-amino-acid polypeptide reads, in one-letter code: Ribosome-recycling factor (185 aa).

Belongs to the RRF family.

Its subcellular location is the cytoplasm. Its function is as follows. Responsible for the release of ribosomes from messenger RNA at the termination of protein biosynthesis. May increase the efficiency of translation by recycling ribosomes from one round of translation to another. This chain is Ribosome-recycling factor, found in Mycobacterium bovis (strain BCG / Pasteur 1173P2).